Consider the following 642-residue polypeptide: Threonine--tRNA ligase (642 aa).

The 61-residue stretch at 1-61 folds into the TGS domain; the sequence is MPVITLPDGS…ENDAQLSIIT (61 aa). The tract at residues 243–534 is catalytic; the sequence is DHRKIGKQLD…LTEEFAGFFP (292 aa). Zn(2+) contacts are provided by Cys334, His385, and His511.

The protein belongs to the class-II aminoacyl-tRNA synthetase family. Homodimer. Zn(2+) serves as cofactor.

It is found in the cytoplasm. It carries out the reaction tRNA(Thr) + L-threonine + ATP = L-threonyl-tRNA(Thr) + AMP + diphosphate + H(+). Its function is as follows. Catalyzes the attachment of threonine to tRNA(Thr) in a two-step reaction: L-threonine is first activated by ATP to form Thr-AMP and then transferred to the acceptor end of tRNA(Thr). Also edits incorrectly charged L-seryl-tRNA(Thr). The polypeptide is Threonine--tRNA ligase (Enterobacter sp. (strain 638)).